The sequence spans 111 residues: MSEQAVENTVLDRFECRSCGYVYEPEKGDSKHDIAPETPFAELPINWRCPVCTAKKAAFSNIGPAGTASGFRENLGYGLGVNKLTPAQKNILIFGALALGFLFFISLYGLQ.

Residues 11–62 enclose the Rubredoxin-like domain; it reads LDRFECRSCGYVYEPEKGDSKHDIAPETPFAELPINWRCPVCTAKKAAFSNI. Fe cation contacts are provided by cysteine 16, cysteine 19, cysteine 49, and cysteine 52.

It belongs to the rubredoxin family. Requires Fe(3+) as cofactor.

Rubredoxin is a small nonheme, iron protein lacking acid-labile sulfide. Its single Fe, chelated to 4 Cys, functions as an electron acceptor and may also stabilize the conformation of the molecule. Could be involved in hydrogenase-linked redox processes. In Trichormus variabilis (strain ATCC 29413 / PCC 7937) (Anabaena variabilis), this protein is Rubredoxin (rub).